The chain runs to 457 residues: tRNA-2-methylthio-N(6)-dimethylallyladenosine synthase (457 aa).

In terms of domain architecture, MTTase N-terminal spans 3-120 (KKVYVKTFGC…LPQMIDARRT (118 aa)). Residues Cys12, Cys49, Cys83, Cys157, Cys161, and Cys164 each contribute to the [4Fe-4S] cluster site. The Radical SAM core domain occupies 143–377 (RVEGPTAFVS…QATIEENVAR (235 aa)). The region spanning 380 to 447 (QSMVGKVERI…PHSLRGELVL (68 aa)) is the TRAM domain.

The protein belongs to the methylthiotransferase family. MiaB subfamily. In terms of assembly, monomer. [4Fe-4S] cluster is required as a cofactor.

It is found in the cytoplasm. The catalysed reaction is N(6)-dimethylallyladenosine(37) in tRNA + (sulfur carrier)-SH + AH2 + 2 S-adenosyl-L-methionine = 2-methylsulfanyl-N(6)-dimethylallyladenosine(37) in tRNA + (sulfur carrier)-H + 5'-deoxyadenosine + L-methionine + A + S-adenosyl-L-homocysteine + 2 H(+). Its function is as follows. Catalyzes the methylthiolation of N6-(dimethylallyl)adenosine (i(6)A), leading to the formation of 2-methylthio-N6-(dimethylallyl)adenosine (ms(2)i(6)A) at position 37 in tRNAs that read codons beginning with uridine. The protein is tRNA-2-methylthio-N(6)-dimethylallyladenosine synthase of Burkholderia multivorans (strain ATCC 17616 / 249).